Here is a 405-residue protein sequence, read N- to C-terminus: L-carnitine CoA-transferase (405 aa).

Residues Lys-97 and Arg-104 each coordinate CoA. Asp-169 (nucleophile) is an active-site residue.

This sequence belongs to the CoA-transferase III family. CaiB subfamily. In terms of assembly, homodimer.

The protein resides in the cytoplasm. The catalysed reaction is crotonobetainyl-CoA + (R)-carnitine = crotonobetaine + (R)-carnitinyl-CoA. It carries out the reaction 4-(trimethylamino)butanoyl-CoA + (R)-carnitine = (R)-carnitinyl-CoA + 4-(trimethylamino)butanoate. The protein operates within amine and polyamine metabolism; carnitine metabolism. Functionally, catalyzes the reversible transfer of the CoA moiety from gamma-butyrobetainyl-CoA to L-carnitine to generate L-carnitinyl-CoA and gamma-butyrobetaine. Is also able to catalyze the reversible transfer of the CoA moiety from gamma-butyrobetainyl-CoA or L-carnitinyl-CoA to crotonobetaine to generate crotonobetainyl-CoA. This chain is L-carnitine CoA-transferase, found in Escherichia coli (strain SE11).